An 85-amino-acid chain; its full sequence is UPF0335 protein BQ12070 (85 aa).

This sequence belongs to the UPF0335 family.

The sequence is that of UPF0335 protein BQ12070 from Bartonella quintana (strain Toulouse) (Rochalimaea quintana).